Here is a 319-residue protein sequence, read N- to C-terminus: Beta-sarcoglycan (319 aa).

Over residues 1-10 (MAAAAAAAAA) the composition is skewed to low complexity. The interval 1 to 33 (MAAAAAAAAAEQQSSNGPVKKSMREKAVERRNV) is disordered. Over 1–66 (MAAAAAAAAA…GLRGRKGNLA (66 aa)) the chain is Cytoplasmic. Over residues 22–33 (SMREKAVERRNV) the composition is skewed to basic and acidic residues. Residues 67–87 (ICVIILLFILAVINLIITLVI) traverse the membrane as a helical; Signal-anchor for type II membrane protein segment. Topologically, residues 88–318 (WAVIRIGPNG…QISDNPCGNT (231 aa)) are extracellular. N-linked (GlcNAc...) asparagine glycosylation is found at Asn159, Asn212, and Asn259. Cystine bridges form between Cys289-Cys315 and Cys291-Cys308.

This sequence belongs to the sarcoglycan beta/delta/gamma/zeta family. As to quaternary structure, cross-link to form 2 major subcomplexes: one consisting of SGCB, SGCD and SGCG and the other consisting of SGCB and SGCD. The association between SGCB and SGCG is particularly strong while SGCA is loosely associated with the other sarcoglycans. In terms of processing, disulfide bonds are present.

It is found in the cell membrane. The protein resides in the sarcolemma. Its subcellular location is the cytoplasm. It localises to the cytoskeleton. Component of the sarcoglycan complex, a subcomplex of the dystrophin-glycoprotein complex which forms a link between the F-actin cytoskeleton and the extracellular matrix. The chain is Beta-sarcoglycan (SGCB) from Pongo abelii (Sumatran orangutan).